The sequence spans 954 residues: Glycine dehydrogenase (decarboxylating) (954 aa).

Lys704 is modified (N6-(pyridoxal phosphate)lysine).

Belongs to the GcvP family. In terms of assembly, the glycine cleavage system is composed of four proteins: P, T, L and H. The cofactor is pyridoxal 5'-phosphate.

It carries out the reaction N(6)-[(R)-lipoyl]-L-lysyl-[glycine-cleavage complex H protein] + glycine + H(+) = N(6)-[(R)-S(8)-aminomethyldihydrolipoyl]-L-lysyl-[glycine-cleavage complex H protein] + CO2. Its function is as follows. The glycine cleavage system catalyzes the degradation of glycine. The P protein binds the alpha-amino group of glycine through its pyridoxal phosphate cofactor; CO(2) is released and the remaining methylamine moiety is then transferred to the lipoamide cofactor of the H protein. The sequence is that of Glycine dehydrogenase (decarboxylating) from Rhizobium etli (strain CIAT 652).